Consider the following 269-residue polypeptide: Exodeoxyribonuclease WalJ (269 aa).

Positions 61, 63, 65, 66, and 150 each coordinate a divalent metal cation.

Belongs to the metallo-beta-lactamase superfamily. The cofactor is Fe(2+). Requires Zn(2+) as cofactor. Mn(2+) is required as a cofactor.

Its subcellular location is the cell membrane. In terms of biological role, 5'-&gt;3' double-stranded DNA exonuclease. May be involved in the WalK/WalR signal transduction pathway. Required for accurate coordination of cell division with DNA replication. May play a role in cell wall metabolism. The polypeptide is Exodeoxyribonuclease WalJ (Streptococcus pneumoniae serotype 2 (strain D39 / NCTC 7466)).